The primary structure comprises 585 residues: Arginine--tRNA ligase (585 aa).

The 'HIGH' region motif lies at 131–141; it reads ANPTGPMHVGH.

This sequence belongs to the class-I aminoacyl-tRNA synthetase family. In terms of assembly, monomer.

Its subcellular location is the cytoplasm. The catalysed reaction is tRNA(Arg) + L-arginine + ATP = L-arginyl-tRNA(Arg) + AMP + diphosphate. This Brucella anthropi (strain ATCC 49188 / DSM 6882 / CCUG 24695 / JCM 21032 / LMG 3331 / NBRC 15819 / NCTC 12168 / Alc 37) (Ochrobactrum anthropi) protein is Arginine--tRNA ligase.